Reading from the N-terminus, the 604-residue chain is Phosphomethylpyrimidine synthase (604 aa).

Residues Asn218, Met247, Tyr276, His312, 332–334, 373–376, and Glu412 contribute to the substrate site; these read SRG and DGLR. His416 provides a ligand contact to Zn(2+). Position 439 (Tyr439) interacts with substrate. His480 contributes to the Zn(2+) binding site. [4Fe-4S] cluster contacts are provided by Cys560, Cys563, and Cys568.

Belongs to the ThiC family. As to quaternary structure, homodimer. [4Fe-4S] cluster is required as a cofactor.

The catalysed reaction is 5-amino-1-(5-phospho-beta-D-ribosyl)imidazole + S-adenosyl-L-methionine = 4-amino-2-methyl-5-(phosphooxymethyl)pyrimidine + CO + 5'-deoxyadenosine + formate + L-methionine + 3 H(+). It functions in the pathway cofactor biosynthesis; thiamine diphosphate biosynthesis. Its function is as follows. Catalyzes the synthesis of the hydroxymethylpyrimidine phosphate (HMP-P) moiety of thiamine from aminoimidazole ribotide (AIR) in a radical S-adenosyl-L-methionine (SAM)-dependent reaction. In Zymomonas mobilis subsp. mobilis (strain ATCC 31821 / ZM4 / CP4), this protein is Phosphomethylpyrimidine synthase.